The primary structure comprises 336 residues: Phosphate acetyltransferase (336 aa).

The protein belongs to the phosphate acetyltransferase and butyryltransferase family.

The protein localises to the cytoplasm. The enzyme catalyses acetyl-CoA + phosphate = acetyl phosphate + CoA. The protein operates within metabolic intermediate biosynthesis; acetyl-CoA biosynthesis; acetyl-CoA from acetate: step 2/2. This chain is Phosphate acetyltransferase (pta), found in Treponema pallidum (strain Nichols).